Consider the following 561-residue polypeptide: DNA ligase B (561 aa).

The N6-AMP-lysine intermediate role is filled by Lys125.

This sequence belongs to the NAD-dependent DNA ligase family. LigB subfamily.

It catalyses the reaction NAD(+) + (deoxyribonucleotide)n-3'-hydroxyl + 5'-phospho-(deoxyribonucleotide)m = (deoxyribonucleotide)n+m + AMP + beta-nicotinamide D-nucleotide.. Its function is as follows. Catalyzes the formation of phosphodiester linkages between 5'-phosphoryl and 3'-hydroxyl groups in double-stranded DNA using NAD as a coenzyme and as the energy source for the reaction. In Salmonella enteritidis PT4 (strain P125109), this protein is DNA ligase B.